The primary structure comprises 326 residues: Glutamine synthetase (326 aa).

A GS beta-grasp domain is found at 4 to 85 (FKLEYIWLDG…VMCEVMMPDG (82 aa)). The 244-residue stretch at 83 to 326 (PDGHAHASNA…GDPYQIVRRF (244 aa)) folds into the GS catalytic domain. Residues Glu-107 and Glu-109 each coordinate Mg(2+). Glu-164 is a binding site for ATP. Positions 169 and 176 each coordinate Mg(2+). Glu-275 serves as a coordination point for L-glutamate.

Belongs to the glutamine synthetase family. Homooctamer and homotetramer. Mg(2+) is required as a cofactor.

It is found in the cytoplasm. It catalyses the reaction L-glutamate + NH4(+) + ATP = L-glutamine + ADP + phosphate + H(+). With respect to regulation, transferase activity is inhibited by NH(4)Cl. In terms of biological role, catalyzes the ATP-dependent biosynthesis of glutamine from glutamate and ammonia. The chain is Glutamine synthetase from Rhizobium leguminosarum bv. phaseoli.